The sequence spans 103 residues: Large ribosomal subunit protein uL23c (103 aa).

Belongs to the universal ribosomal protein uL23 family. In terms of assembly, part of the 50S ribosomal subunit.

The protein resides in the plastid. The protein localises to the chloroplast. Its function is as follows. Binds to 23S rRNA. This Gracilaria tenuistipitata var. liui (Red alga) protein is Large ribosomal subunit protein uL23c (rpl23).